The chain runs to 551 residues: Synapse-associated protein of 47 kDa (551 aa).

2 disordered regions span residues 20–72 (AGDE…AGKR) and 117–198 (AMPA…GQGK). Composition is skewed to low complexity over residues 26–59 (PAPT…AAAA), 117–128 (AMPAMPSIPSIP), and 137–146 (DGAEGAEGAV). Residues serine 178 and serine 182 each carry the phosphoserine modification. Residues 182–197 (SGGGTPTGDEGQIGQG) show a composition bias toward gly residues. Position 186 is a phosphothreonine (threonine 186). In terms of domain architecture, BSD spans 295–347 (VDFEFSYDTAYPTAIAIMAEDKALETMRFELVPKIITEENFWRNYFYRVSLII). The tract at residues 360 to 391 (VGQASSGEDANEVATKEKKSKTAEPAKGDSSV) is disordered. A compositionally biased stretch (basic and acidic residues) spans 373 to 386 (ATKEKKSKTAEPAK). A Phosphoserine modification is found at serine 433. The interval 487–551 (KDYEVVDEGG…DLIEDTDDLK (65 aa)) is disordered. Over residues 514-523 (DDTEADEDEP) the composition is skewed to acidic residues. Positions 524-535 (TISNLRTRSTNN) are enriched in polar residues. A Phosphothreonine modification is found at threonine 530. The span at 536-551 (DWEEYADLIEDTDDLK) shows a compositional bias: acidic residues.

Expressed specifically in neurons and transported to synaptic terminals.

The sequence is that of Synapse-associated protein of 47 kDa (Sap47) from Drosophila melanogaster (Fruit fly).